Here is a 384-residue protein sequence, read N- to C-terminus: Protein V (384 aa).

2 disordered regions span residues 1 to 23 and 38 to 317; these read MDQDAFILKEDSEVEREAPGGRE and SEPT…TKKG. The span at 7–20 shows a compositional bias: basic and acidic residues; sequence ILKEDSEVEREAPG. A compositionally biased stretch (polar residues) spans 50 to 59; it reads LHNTINTPQG. Phosphoserine; by host is present on Ser-68. Residues 83 to 101 show a composition bias toward basic and acidic residues; sequence RSGEESRVSGRTSKPEAEA. Position 125 is a phosphoserine; by host (Ser-125). Residues 150–168 are compositionally biased toward basic and acidic residues; the sequence is GIEDENREMAAHPDKRGED. Residues 191 to 206 are compositionally biased toward polar residues; that stretch reads ASNNGRSMEPGSSHSA. Residues Ser-192, Ser-249, Ser-257, and Ser-260 each carry the phosphoserine; by host modification. Positions 318, 337, 341, 353, 355, 358, 362, and 365 each coordinate Zn(2+).

Belongs to the paramyxoviruses V protein family. Interacts with host IFIH1/MDA5 and DHX58/LGP2. Interacts with host IRF3. Interacts with host RIGI regulatory protein (via CARDs domain) and host TRIM25 (via SPRY domain); these interactions prevent TRIM25-mediated ubiquitination of RIG-I and disrupts downstream RIG-I signaling.

The protein localises to the host cytoplasm. Plays an essential role in the inhibition of host immune response. Prevents the establishment of cellular antiviral state by blocking interferon-alpha/beta (IFN-alpha/beta) production and signaling pathway. Interacts with host IFIH1/MDA5 and DHX58/LGP2 to inhibit the transduction pathway involved in the activation of IFN-beta promoter, thus protecting the virus against cell antiviral state. Also interacts with and inhibits host IRF3. Blocks the type I interferon signaling pathway by disrupting the RIG-I signaling pathway. This Sendai virus (strain Fushimi) (SeV) protein is Protein V (P/V/C).